Here is a 165-residue protein sequence, read N- to C-terminus: MFNKLHLVSLLACGLFVIAQANTVKKCEKKMPASLKSQLCEIRKYKLLDTPDMDKHMDCVMKALDFVRPDGTGDYHKLIKPLNAIEKDRKHDFNLEKCGGQTQHLPVGKRANAYYKCLVESTSGDAFKKVFDTVELVKAKKLPALSQYSSVVDKLMKKIDDKICN.

An N-terminal signal peptide occupies residues 1–21 (MFNKLHLVSLLACGLFVIAQA). Cystine bridges form between C27–C59, C40–C164, and C98–C117. Serotonin contacts are provided by E28, H56, Y115, D132, and E135. 3 residues coordinate histamine: Y115, D132, and E135.

This sequence belongs to the PBP/GOBP family. Female salivary gland. Not detected in female carcass without salivary glands. Not detected in male tissues.

Its subcellular location is the secreted. In terms of biological role, modulates blood feeding of female mosquitoes on vertebrate species by binding and sequestering different mediators involved in the host response. Binds serotonin and histamine. Increases blood clotting time. In Anopheles gambiae (African malaria mosquito), this protein is Short form salivary protein D7R1.